A 248-amino-acid chain; its full sequence is 2,3-bisphosphoglycerate-dependent phosphoglycerate mutase 2 (248 aa).

Substrate-binding positions include 8 to 15 (RHGESAWN), 21 to 22 (TG), R60, 87 to 90 (EKHY), K98, 114 to 115 (RR), and 183 to 184 (GN). The Tele-phosphohistidine intermediate role is filled by H9. E87 serves as the catalytic Proton donor/acceptor.

The protein belongs to the phosphoglycerate mutase family. BPG-dependent PGAM subfamily.

The enzyme catalyses (2R)-2-phosphoglycerate = (2R)-3-phosphoglycerate. Its pathway is carbohydrate degradation; glycolysis; pyruvate from D-glyceraldehyde 3-phosphate: step 3/5. Its function is as follows. Catalyzes the interconversion of 2-phosphoglycerate and 3-phosphoglycerate. This Bacteroides thetaiotaomicron (strain ATCC 29148 / DSM 2079 / JCM 5827 / CCUG 10774 / NCTC 10582 / VPI-5482 / E50) protein is 2,3-bisphosphoglycerate-dependent phosphoglycerate mutase 2.